The chain runs to 419 residues: Imidazolonepropionase (419 aa).

Fe(3+) is bound by residues His82 and His84. Zn(2+) contacts are provided by His82 and His84. 4-imidazolone-5-propanoate-binding residues include Arg91, Tyr154, and His187. Residue Tyr154 coordinates N-formimidoyl-L-glutamate. His252 serves as a coordination point for Fe(3+). His252 contacts Zn(2+). Glu255 lines the 4-imidazolone-5-propanoate pocket. Asp326 contacts Fe(3+). Asp326 provides a ligand contact to Zn(2+). Asn328 and Gly330 together coordinate N-formimidoyl-L-glutamate. Ser331 is a binding site for 4-imidazolone-5-propanoate.

Belongs to the metallo-dependent hydrolases superfamily. HutI family. The cofactor is Zn(2+). Requires Fe(3+) as cofactor.

The protein resides in the cytoplasm. It catalyses the reaction 4-imidazolone-5-propanoate + H2O = N-formimidoyl-L-glutamate. It participates in amino-acid degradation; L-histidine degradation into L-glutamate; N-formimidoyl-L-glutamate from L-histidine: step 3/3. Catalyzes the hydrolytic cleavage of the carbon-nitrogen bond in imidazolone-5-propanoate to yield N-formimidoyl-L-glutamate. It is the third step in the universal histidine degradation pathway. The polypeptide is Imidazolonepropionase (Clostridium tetani (strain Massachusetts / E88)).